The primary structure comprises 232 residues: NAD(P)H-hydrate epimerase (232 aa).

Positions alanine 9–leucine 219 constitute a YjeF N-terminal domain. Residue asparagine 62–aspartate 66 participates in (6S)-NADPHX binding. K(+)-binding residues include asparagine 63 and aspartate 127. Residues glycine 131–proline 137 and aspartate 160 contribute to the (6S)-NADPHX site. Residue serine 163 participates in K(+) binding.

This sequence belongs to the NnrE/AIBP family. K(+) serves as cofactor.

The catalysed reaction is (6R)-NADHX = (6S)-NADHX. It carries out the reaction (6R)-NADPHX = (6S)-NADPHX. Catalyzes the epimerization of the S- and R-forms of NAD(P)HX, a damaged form of NAD(P)H that is a result of enzymatic or heat-dependent hydration. This is a prerequisite for the S-specific NAD(P)H-hydrate dehydratase to allow the repair of both epimers of NAD(P)HX. The polypeptide is NAD(P)H-hydrate epimerase (Aedes aegypti (Yellowfever mosquito)).